The chain runs to 412 residues: CCA-adding enzyme (412 aa).

ATP contacts are provided by Gly8 and Arg11. Positions 8 and 11 each coordinate CTP. Positions 21 and 23 each coordinate Mg(2+). Residues Arg91, Arg137, and Arg140 each coordinate ATP. CTP contacts are provided by Arg91, Arg137, and Arg140.

The protein belongs to the tRNA nucleotidyltransferase/poly(A) polymerase family. Bacterial CCA-adding enzyme type 2 subfamily. Mg(2+) serves as cofactor.

The enzyme catalyses a tRNA precursor + 2 CTP + ATP = a tRNA with a 3' CCA end + 3 diphosphate. It catalyses the reaction a tRNA with a 3' CCA end + 2 CTP + ATP = a tRNA with a 3' CCACCA end + 3 diphosphate. In terms of biological role, catalyzes the addition and repair of the essential 3'-terminal CCA sequence in tRNAs without using a nucleic acid template. Adds these three nucleotides in the order of C, C, and A to the tRNA nucleotide-73, using CTP and ATP as substrates and producing inorganic pyrophosphate. tRNA 3'-terminal CCA addition is required both for tRNA processing and repair. Also involved in tRNA surveillance by mediating tandem CCA addition to generate a CCACCA at the 3' terminus of unstable tRNAs. While stable tRNAs receive only 3'-terminal CCA, unstable tRNAs are marked with CCACCA and rapidly degraded. The polypeptide is CCA-adding enzyme (Buchnera aphidicola subsp. Schizaphis graminum (strain Sg)).